A 344-amino-acid polypeptide reads, in one-letter code: Lipase chaperone (344 aa).

The helical transmembrane segment at 14 to 34 (AMVYGVVGLAAIAGVAMWSGA) threads the bilayer.

The protein belongs to the lipase chaperone family.

Its subcellular location is the cell inner membrane. May be involved in the folding of the extracellular lipase during its passage through the periplasm. This chain is Lipase chaperone, found in Burkholderia lata (strain ATCC 17760 / DSM 23089 / LMG 22485 / NCIMB 9086 / R18194 / 383).